Consider the following 306-residue polypeptide: Transcription factor MYBS1 (306 aa).

The 56-residue stretch at 18-73 (WTREDDKAFENALAACAAPPPADGGAPDDDWFAALAASVPGARSAEEVRRHYEALV) folds into the Myb-like domain. The Nuclear export signal 1 signature appears at 72–86 (LVEDVAAIDAGRVPL). The tract at residues 89-142 (YAGEESAAPPDGAGAAAAASKDGGHRRDERKGGGGGYDGGKSCSKAEQERRKGI) is disordered. Residues 92-109 (EESAAPPDGAGAAAAASK) are compositionally biased toward low complexity. Composition is skewed to basic and acidic residues over residues 110–120 (DGGHRRDERKG) and 132–142 (SKAEQERRKGI). The Nuclear localization signal 1 motif lies at 133-140 (KAEQERRK). The 57-residue stretch at 136–192 (QERRKGIPWTEEEHRLFLLGLDKFGKGDWRSISRNFVISRTPTQVASHAQKYFIRLN) folds into the HTH myb-type domain. Residues 164–188 (WRSISRNFVISRTPTQVASHAQKYF) constitute a DNA-binding region (H-T-H motif). The Nuclear localization signal 2 signature appears at 196-200 (RDRRR). The short motif at 203–215 (IHDITSVTAGDQV) is the Nuclear export signal 2 element. Over residues 228–241 (ATGNPAAAALGPPG) the composition is skewed to low complexity. The tract at residues 228–255 (ATGNPAAAALGPPGMKHHHHHHPGGAPP) is disordered.

In terms of assembly, homodimer. Interacts with GAMYB. Expressed in aboveground tissues, with the highest level in leaves.

Its subcellular location is the nucleus. It localises to the cytoplasm. In terms of biological role, transcription activator that binds to 5'-TATCCA-3' elements in gene promoters. Derepresses strongly the sugar-repressed transcription of promoters containing SRS or 5'-TATCCA-3' elements. Functions with GAMYB to integrate diverse nutrient starvation and gibberellin (GA) signaling pathways during germination of grains. Sugar, nitrogen and phosphate starvation signals converge and interconnect with GA to promote the co-nuclear import of MYBS1 and GAMYB, resulting in the expression of a large set of GA-inducible hydrolases, transporters, and regulators that are essential for mobilization of nutrient reserves in the endosperm to support seedling growth. This chain is Transcription factor MYBS1, found in Oryza sativa subsp. japonica (Rice).